Consider the following 909-residue polypeptide: DNA mismatch repair protein MutS (909 aa).

The segment covering 275-290 (QKAERPPLSRPEREEQ) has biased composition (basic and acidic residues). The disordered stretch occupies residues 275-295 (QKAERPPLSRPEREEQGSTLF). Residue 661–668 (GPNMGGKS) participates in ATP binding.

This sequence belongs to the DNA mismatch repair MutS family.

This protein is involved in the repair of mismatches in DNA. It is possible that it carries out the mismatch recognition step. This protein has a weak ATPase activity. This chain is DNA mismatch repair protein MutS, found in Mesorhizobium japonicum (strain LMG 29417 / CECT 9101 / MAFF 303099) (Mesorhizobium loti (strain MAFF 303099)).